The following is a 44-amino-acid chain: Thrombin-like enzyme F202 (44 aa).

Residues 1–44 form the Peptidase S1 domain; the sequence is VVGGDECNINEHRFLVALYANSSLLCGGTLINQEWVLIAAHCDR. A disulfide bridge connects residues cysteine 26 and cysteine 42. Histidine 41 acts as the Charge relay system in catalysis.

The protein belongs to the peptidase S1 family. Snake venom subfamily. Monomer. Post-translationally, contains 6 disulfide bonds. As to expression, expressed by the venom gland.

The protein resides in the secreted. With respect to regulation, enzyme activity is markedly inhibited by TLCK and PMSF, and moderately by SBTi. Platelet aggregating activity is strongly inhibited by TLCK. Its function is as follows. Thrombin-like snake venom serine protease that coagulates fibrinogen by inducing a fast degradation of the alpha chain (FGA) from human citrated plasma, and a slow degradation of beta chain (FGB). Potently induces platelet aggregation in both platelet rich plasma and washed platelet preparations in a concentration-dependent fashion. Shows amidolytic activities. This chain is Thrombin-like enzyme F202, found in Crotalus durissus cascavella (Northeastern Brazilian rattlesnake).